The primary structure comprises 188 residues: Archaetidylinositol phosphate synthase (188 aa).

The next 2 helical transmembrane spans lie at leucine 20–leucine 40 and isoleucine 51–alanine 71. Mg(2+) contacts are provided by aspartate 64, aspartate 67, aspartate 85, and aspartate 89. The active-site Proton acceptor is the aspartate 89. Transmembrane regions (helical) follow at residues isoleucine 96–isoleucine 116 and isoleucine 147–alanine 167.

This sequence belongs to the CDP-alcohol phosphatidyltransferase class-I family. Mn(2+) is required as a cofactor. It depends on Mg(2+) as a cofactor.

The protein resides in the cell membrane. It carries out the reaction CDP-2,3-bis-O-(phytanyl)-sn-glycerol + 1D-myo-inositol 3-phosphate = saturated 1-archaetidyl-1D-myo-inositol 3-phosphate + CMP + H(+). Its pathway is lipid metabolism; phospholipid metabolism. Its function is as follows. Catalyzes the formation of archaetidylinositol phosphate (AIP) from CDP-archaeol (CDP-ArOH or CDP-2,3-bis-(O-phytanyl)-sn-glycerol) and 1L-myo-inositol 1-phosphate (IP or 1D-myo-inositol 3-phosphate). AIP is a precursor of archaetidyl-myo-inositol (AI), an ether-type inositol phospholipid ubiquitously distributed in archaea membranes and essential for glycolipid biosynthesis in archaea. This Pyrococcus horikoshii (strain ATCC 700860 / DSM 12428 / JCM 9974 / NBRC 100139 / OT-3) protein is Archaetidylinositol phosphate synthase.